The primary structure comprises 102 residues: Biotrophy-associated secreted protein 2 (102 aa).

A signal peptide spans 1–19 (MVRVSTFAAILAMALSVTA). Asn46 is a glycosylation site (N-linked (GlcNAc...) asparagine).

It is found in the secreted. Its function is as follows. Secreted effector involved in biotrophic colonization of plant cells. In Pyricularia oryzae (strain 70-15 / ATCC MYA-4617 / FGSC 8958) (Rice blast fungus), this protein is Biotrophy-associated secreted protein 2.